A 249-amino-acid chain; its full sequence is 2,3-bisphosphoglycerate-dependent phosphoglycerate mutase (249 aa).

Residues 9–16, 22–23, R61, 88–91, K99, 115–116, and 184–185 contribute to the substrate site; these read RHGQSQWN, TG, ERHY, RR, and GN. Catalysis depends on H10, which acts as the Tele-phosphohistidine intermediate. Residue E88 is the Proton donor/acceptor of the active site.

Belongs to the phosphoglycerate mutase family. BPG-dependent PGAM subfamily. As to quaternary structure, homodimer.

It catalyses the reaction (2R)-2-phosphoglycerate = (2R)-3-phosphoglycerate. It participates in carbohydrate degradation; glycolysis; pyruvate from D-glyceraldehyde 3-phosphate: step 3/5. Catalyzes the interconversion of 2-phosphoglycerate and 3-phosphoglycerate. This Xylella fastidiosa (strain M23) protein is 2,3-bisphosphoglycerate-dependent phosphoglycerate mutase.